A 281-amino-acid chain; its full sequence is Large ribosomal subunit protein uL2 (281 aa).

Residues 220–281 are disordered; that stretch reads VRGSVMNPND…RRRDGKALSK (62 aa). Residues 258–271 show a composition bias toward basic residues; the sequence is KTRKKNKQSNKMIM. Residues 272–281 show a composition bias toward basic and acidic residues; that stretch reads RRRDGKALSK.

Belongs to the universal ribosomal protein uL2 family. Part of the 50S ribosomal subunit. Forms a bridge to the 30S subunit in the 70S ribosome.

Functionally, one of the primary rRNA binding proteins. Required for association of the 30S and 50S subunits to form the 70S ribosome, for tRNA binding and peptide bond formation. It has been suggested to have peptidyltransferase activity; this is somewhat controversial. Makes several contacts with the 16S rRNA in the 70S ribosome. This Lachnoclostridium phytofermentans (strain ATCC 700394 / DSM 18823 / ISDg) (Clostridium phytofermentans) protein is Large ribosomal subunit protein uL2.